Here is a 304-residue protein sequence, read N- to C-terminus: DDRGK domain-containing protein 1 (304 aa).

Residues 1 to 2 (MD) lie on the Lumenal side of the membrane. A helical membrane pass occupies residues 3-23 (LIILVGIAIALLVVIISLYLL). The Cytoplasmic portion of the chain corresponds to 24-304 (QKKNSTTEAK…LTPVSAEGSS (281 aa)). The tract at residues 31-174 (EAKPAAAAPQ…AERLAKEERE (144 aa)) is disordered. The span at 53-82 (RRAQIARNQRNRLRQNAPVAAAAPQAEAPA) shows a compositional bias: low complexity. Basic and acidic residues predominate over residues 105-174 (LDEKMGAKKR…AERLAKEERE (70 aa)).

It belongs to the DDRGK1 family. Interacts with Atg9; the interaction is transient.

It localises to the endoplasmic reticulum membrane. Functionally, substrate adapter for ufmylation, the covalent attachment of the ubiquitin-like modifier UFM1 to substrate proteins. Required for ufmylation of Atg9; protects the nervous system during aging, possibly by stabilizing Atg9 and supporting its function. The polypeptide is DDRGK domain-containing protein 1 (Drosophila ananassae (Fruit fly)).